Here is a 1388-residue protein sequence, read N- to C-terminus: Rho-associated protein kinase 2 (1388 aa).

Residues 1–26 (MSRPPPTGKMPGAPEAAPGDGAGAGR) are disordered. The Protein kinase domain occupies 92–354 (YDVVKVIGRG…VEEIKQHPFF (263 aa)). Residues 98–106 (IGRGAFGEV) and lysine 121 each bind ATP. Aspartate 214 acts as the Proton acceptor in catalysis. Residues 357–425 (DQWNWDNIRE…FRENLLLSDS (69 aa)) form the AGC-kinase C-terminal domain. An interaction with PPP1R12A region spans residues 363–784 (NIRETAAPVV…LNELLKQKDV (422 aa)). The segment at 373–420 (PELSSDIDSSNFDDIEDDKGDVETFPIPKAFVGNQLPFIGFTYFRENL) is interaction with NPM1. Threonine 414 bears the Phosphothreonine; by ROCK2 mark. The stretch at 439 to 1131 (SEESQEIQKK…QLQALHIGMD (693 aa)) forms a coiled coil. An REM-1 domain is found at 497–573 (TLRQLEREKA…LDEANALLRT (77 aa)). The segment covering 512-530 (NAEYQRKADHEADKKRNLE) has biased composition (basic and acidic residues). Positions 512–532 (NAEYQRKADHEADKKRNLEND) are disordered. Phosphotyrosine; by SRC is present on tyrosine 722. In terms of domain architecture, RhoBD spans 979–1047 (TSDVANLANE…LAEIMNRKEP (69 aa)). The interval 979–1047 (TSDVANLANE…LAEIMNRKEP (69 aa)) is RHOA binding. At serine 1137 the chain carries Phosphoserine. In terms of domain architecture, PH spans 1150–1349 (ESRLEGWLSL…WVSRLVKKIP (200 aa)). Threonine 1212 carries the post-translational modification Phosphothreonine. A Phorbol-ester/DAG-type zinc finger spans residues 1260–1315 (GHEFIPTLYHFPTNCEACMKPLWHMFKPPPALECRRCHIKCHKDHMDKKEEIIAPC). Residues 1345-1388 (VKKIPKKPPAPDPFARSSPRTSMKIQQNQSIRRPSRQLAPNKPS) are disordered. Residues serine 1362 and serine 1374 each carry the phosphoserine modification. The span at 1362 to 1376 (SPRTSMKIQQNQSIR) shows a compositional bias: polar residues.

This sequence belongs to the protein kinase superfamily. AGC Ser/Thr protein kinase family. As to quaternary structure, homodimer. Interacts with IRS1. Interacts with RAF1. Interacts with RHOA (activated by GTP), RHOB and RHOC. Interacts with PPP1R12A. Interacts with EP300. Interacts with CHORDC1. Interacts with BRCA2. Interacts with NPM1; this interaction enhances ROCK2 activity. Interacts with SORL1. Interacts with PJVK. Mg(2+) serves as cofactor. In terms of processing, autophosphorylated. Phosphorylation at Tyr-722 reduces its binding to RHOA and is crucial for focal adhesion dynamics. Dephosphorylation by PTPN11 stimulates its RHOA binding activity. Cleaved by granzyme B during apoptosis. This leads to constitutive activation of the kinase and membrane blebbing. In terms of tissue distribution, highly expressed in brain, heart, lung, liver, stomach, spleen, kidney, testis, muscle, embryo and placenta. Isoform 2 is expressed predominantly in the skeletal muscle.

The protein localises to the cytoplasm. Its subcellular location is the cell membrane. The protein resides in the nucleus. It is found in the cytoskeleton. It localises to the microtubule organizing center. The protein localises to the centrosome. It catalyses the reaction L-seryl-[protein] + ATP = O-phospho-L-seryl-[protein] + ADP + H(+). The catalysed reaction is L-threonyl-[protein] + ATP = O-phospho-L-threonyl-[protein] + ADP + H(+). Activated by RHOA binding. Inhibited by Y-27632. Functionally, protein kinase which is a key regulator of actin cytoskeleton and cell polarity. Involved in regulation of smooth muscle contraction, actin cytoskeleton organization, stress fiber and focal adhesion formation, neurite retraction, cell adhesion and motility via phosphorylation of ADD1, BRCA2, CNN1, EZR, DPYSL2, EP300, MSN, MYL9/MLC2, NPM1, RDX, PPP1R12A and VIM. Phosphorylates SORL1 and IRF4. Acts as a negative regulator of VEGF-induced angiogenic endothelial cell activation. Positively regulates the activation of p42/MAPK1-p44/MAPK3 and of p90RSK/RPS6KA1 during myogenic differentiation. Plays an important role in the timely initiation of centrosome duplication. Inhibits keratinocyte terminal differentiation. May regulate closure of the eyelids and ventral body wall through organization of actomyosin bundles. Plays a critical role in the regulation of spine and synaptic properties in the hippocampus. Plays a role in placental homeostasis during the perinatal period. Plays an important role in generating the circadian rhythm of the aortic myofilament Ca(2+) sensitivity and vascular contractility by modulating the myosin light chain phosphorylation. This chain is Rho-associated protein kinase 2 (Rock2), found in Mus musculus (Mouse).